Here is a 512-residue protein sequence, read N- to C-terminus: Mesoderm induction early response protein 1 (512 aa).

Residues 1–16 (MAEPSVESSSPGGSAT) show a composition bias toward low complexity. Disordered regions lie at residues 1-63 (MAEP…REGD) and 75-173 (YGST…EDYI). Serine 10 bears the Phosphoserine mark. Basic and acidic residues predominate over residues 17–36 (SDDHEFDPSADMLVHDFDDE). Acidic residues-rich tracts occupy residues 37 to 46 (RTLEEEEMME) and 83 to 105 (EEDE…DNDD). Over residues 129–144 (QSSNDDPSQSVASQDA) the composition is skewed to polar residues. The residue at position 141 (serine 141) is a Phosphoserine. Position 155 is a phosphotyrosine (tyrosine 155). Phosphoserine occurs at positions 160 and 166. The segment covering 160–173 (SEVEEESEEDEDYI) has biased composition (acidic residues). In terms of domain architecture, ELM2 spans 180–278 (KEIMVGSMFQ…EALRRLRFNV (99 aa)). The interaction with HDAC1 stretch occupies residues 180 to 284 (KEIMVGSMFQ…RFNVKAAREE (105 aa)). Lysine 239 is covalently cross-linked (Glycyl lysine isopeptide (Lys-Gly) (interchain with G-Cter in SUMO2)). An SANT domain is found at 283–335 (EELSVWTEEECRNFEQGLKAYGKDFHLIQANKVRTRSVGECVAFYYMWKKSER). The disordered stretch occupies residues 366 to 512 (ESESAASSRA…KFEELENTDD (147 aa)). 3 positions are modified to phosphoserine: serine 367, serine 369, and serine 377. Residues 396 to 409 (TVSTTNQNGVSSNG) show a composition bias toward polar residues. Residues 414–423 (LNKEEVKVEG) show a composition bias toward basic and acidic residues. Lysine 420 participates in a covalent cross-link: Glycyl lysine isopeptide (Lys-Gly) (interchain with G-Cter in SUMO2). A Phosphothreonine modification is found at threonine 448. Residues 462 to 475 (ARNENDFDEKSERP) show a composition bias toward basic and acidic residues. Positions 482–494 (NSNGKESPGSSEF) are enriched in polar residues. 3 positions are modified to phosphoserine: serine 483, serine 488, and serine 491.

In terms of assembly, interacts with HDAC1. Part of a complex containing at least CDYL, MIER1, MIER2, HDAC1 and HDAC2.

It localises to the nucleus. Functionally, transcriptional repressor regulating the expression of a number of genes including SP1 target genes. Probably functions through recruitment of HDAC1 a histone deacetylase involved in chromatin silencing. This Pongo abelii (Sumatran orangutan) protein is Mesoderm induction early response protein 1 (MIER1).